The chain runs to 1883 residues: Lysophospholipase NTE1 (1883 aa).

Residues 1–75 (MSQVPVASPA…LLRVVLASLN (75 aa)) lie on the Cytoplasmic side of the membrane. A helical transmembrane segment spans residues 76–96 (LIRILATFSTITVPSLVYAIL). The Lumenal segment spans residues 97–103 (HYSLTLQ). Residues 104-124 (LNFPSLALLFLTSLISAFIWL) form a helical membrane-spanning segment. Over 125-1883 (RYRHLNKYER…AGISARRNSI (1759 aa)) the chain is Cytoplasmic. Disordered regions lie at residues 284-327 (HLAP…FNPP), 355-410 (ERLG…LYHA), 618-693 (SQRS…MVGP), 716-764 (SAQP…RKGS), 921-1069 (EEDR…ATNS), and 1084-1108 (LHQQ…GKRS). Over residues 311–327 (NNATAPTSPYSSAFNPP) the composition is skewed to polar residues. The span at 372–383 (ARTASSGTASAT) shows a compositional bias: low complexity. The span at 650-668 (PSLTTSSKQSNQKPTSSRI) shows a compositional bias: polar residues. A nucleoside 3',5'-cyclic phosphate is bound by residues 863 to 1158 (AGHG…RRPI) and 1166 to 1285 (RLLS…IARR). Over residues 936-948 (TDASSGSSRQNRP) the composition is skewed to polar residues. Residues 964-974 (LLDERNLREAD) are compositionally biased toward basic and acidic residues. 2 stretches are compositionally biased toward polar residues: residues 988–998 (ISSNGDGNSGS) and 1084–1100 (LHQQ…QSSQ). In terms of domain architecture, PNPLA spans 1544–1708 (LVLGGGGARG…VDNLPVTVML (165 aa)). A GXGXXG motif is present at residues 1548-1553 (GGGARG). The short motif at 1575–1579 (GTSIG) is the GXSXG element. The Nucleophile role is filled by Ser1577. The Proton acceptor role is filled by Asp1695. A DGA/G motif is present at residues 1695–1697 (DGG). The segment at 1852-1883 (DESGVGGGVRKIRKKRRRTRRKAGISARRNSI) is disordered. The span at 1861-1874 (RKIRKKRRRTRRKA) shows a compositional bias: basic residues.

This sequence belongs to the NTE family.

It is found in the endoplasmic reticulum membrane. The enzyme catalyses a 1-acyl-sn-glycero-3-phosphocholine + H2O = sn-glycerol 3-phosphocholine + a fatty acid + H(+). Inhibited by organophosphorus esters. Its function is as follows. Intracellular phospholipase B that catalyzes the double deacylation of phosphatidylcholine (PC) to glycerophosphocholine (GroPCho). Plays an important role in membrane lipid homeostasis. Responsible for the rapid PC turnover in response to inositol, elevated temperatures, or when choline is present in the growth medium. This chain is Lysophospholipase NTE1 (NTE1), found in Mycosarcoma maydis (Corn smut fungus).